The sequence spans 197 residues: Na(+)-translocating NADH-quinone reductase subunit E (197 aa).

Helical transmembrane passes span serine 11 to valine 31, valine 35 to alanine 55, phenylalanine 76 to phenylalanine 96, leucine 108 to methionine 128, valine 139 to isoleucine 159, and leucine 175 to isoleucine 195.

This sequence belongs to the NqrDE/RnfAE family. As to quaternary structure, composed of six subunits; NqrA, NqrB, NqrC, NqrD, NqrE and NqrF.

The protein resides in the cell inner membrane. It carries out the reaction a ubiquinone + n Na(+)(in) + NADH + H(+) = a ubiquinol + n Na(+)(out) + NAD(+). In terms of biological role, NQR complex catalyzes the reduction of ubiquinone-1 to ubiquinol by two successive reactions, coupled with the transport of Na(+) ions from the cytoplasm to the periplasm. NqrA to NqrE are probably involved in the second step, the conversion of ubisemiquinone to ubiquinol. In Neisseria gonorrhoeae (strain ATCC 700825 / FA 1090), this protein is Na(+)-translocating NADH-quinone reductase subunit E.